The primary structure comprises 973 residues: Nuclear factor NF-kappa-B p105 subunit (973 aa).

The RHD domain maps to 38 to 245 (ADGPYLQILE…DAIYDSKAPN (208 aa)). Cys60 bears the S-nitrosocysteine; alternate mark. Residue Cys60 is the site of S-(15-deoxy-Delta12,14-prostaglandin J2-9-yl)cysteine; alternate attachment. Residue Lys324 forms a Glycyl lysine isopeptide (Lys-Gly) (interchain with G-Cter in SUMO2) linkage. Residue Ser336 is modified to Phosphoserine. Residues 359–364 (QRKRQK) carry the Nuclear localization signal motif. Residues 371-394 (DSFGGGSGAGAGGGGMFGSGGGGG) form a GRR region. The tract at residues 434–467 (TINTKFKNEPRDCAKSDDREILNPPEKETQGEGP) is disordered. The interaction with CFLAR stretch occupies residues 435 to 973 (INTKFKNEPR…GQDGPIEGKI (539 aa)). The segment covering 439-463 (FKNEPRDCAKSDDREILNPPEKETQ) has biased composition (basic and acidic residues). Position 440 is an N6-acetyllysine (Lys440). Ser449 carries the phosphoserine modification. ANK repeat units follow at residues 540–570 (NGDSVLHLAIIHLHAQLVRDLLEVTSGSISD), 579–608 (LYQTPLHLAVITKQEDVVEDLLRVGADLSL), 612–641 (WGNSVLHLAAKEGHDKILGVLLKNSKAALL), 648–677 (EGLNAIHIAVMSNSLSCLQLLVAAGAEVNA), 682–711 (SGRTALHLAVEYDNISLAGCLLLEGDALVD), and 716–745 (DGTTPLHIAAGRGSTRLAALLKAAGADPLV). An essential for interaction with HIF1AN region spans residues 648-682 (EGLNAIHIAVMSNSLSCLQLLVAAGAEVNAQEQKS). Asn676 bears the (3S)-3-hydroxyasparagine; by HIF1AN mark. Position 757 is a phosphoserine (Ser757). The ANK 7 repeat unit spans residues 769–799 (PGTTPLDMAANWQVFDILNGKPYEPVFTSDD). One can recognise a Death domain in the interval 803–890 (QGDIKQLTED…EAIEVIQAAF (88 aa)). The residue at position 898 (Ser898) is a Phosphoserine. The residue at position 912 (Ser912) is a Phosphoserine; by GSK3-beta; in vitro. The residue at position 928 (Ser928) is a Phosphoserine. Residues Ser932 and Ser937 each carry the phosphoserine; by IKKB modification. Residue Ser942 is modified to Phosphoserine. A Phosphothreonine modification is found at Thr948.

In terms of assembly, component of the NF-kappa-B p65-p50 complex. Homodimer; component of the NF-kappa-B p50-p50 complex. Component of the NF-kappa-B p105-p50 complex. Component of the NF-kappa-B p50-c-Rel complex. Component of a complex consisting of the NF-kappa-B p50-p50 homodimer and BCL3. Also interacts with MAP3K8. NF-kappa-B p50 subunit interacts with NCOA3 coactivator, which may coactivate NF-kappa-B dependent expression via its histone acetyltransferase activity. Interacts with TSC22D3; this interaction prevents nuclear translocation and DNA-binding. Interacts with SPAG9 and UNC5CL. NFKB1/p105 interacts with CFLAR; the interaction inhibits p105 processing into p50. NFKB1/p105 forms a ternary complex with MAP3K8 and TNIP2. Interacts with GSK3B; the interaction prevents processing of p105 to p50. NFKB1/p50 interacts with NFKBIE. NFKB1/p50 interacts with NFKBIZ. Nuclear factor NF-kappa-B p50 subunit interacts with NFKBID. Directly interacts with MEN1. Interacts with HIF1AN. Interacts with FEM1A; interaction is direct. Post-translationally, generation of the NF-kappa-B p50 (Nuclear factor NF-kappa-B p50 subunit) transcription factor takes place both cotranslationally and post-translationally via non-mutually exclusive mechanisms. A cotranslational processing allows the production of both p50 and p105 (Nuclear factor NF-kappa-B p105 subunit) from a single NFKB1 mRNA. While translation occurs, the particular unfolded structure after the GRR repeat region acts as a substrate for the proteasome, promoting degradation of the C-terminus. The GRR acts as a proteasomal 'stop signal', protecting the region upstream of the GRR from degradation and promoting generation of p50. It is unclear if limited proteasome degradation during cotranslational processing depends on ubiquitination. NF-kappa-B p50 is also generated post-translationally following ubiquitination by the KPC complex, leading to limited processing by the proteasome downstream of the GRR region, thereby generating p50. In terms of processing, phosphorylation at the C-terminus by IKBKB/IKKB acts as a signal for ubiquitination and promotes either complete degradation or processing to generate the NF-kappa-B p50 (Nuclear factor NF-kappa-B p50 subunit). Phosphorylation at Ser-912 primes p105 for proteolytic processing in response to TNF-alpha stimulation. Phosphorylation at Ser-928, Ser-932 and Ser-937 are required for BTRC/BTRCP-mediated ubiquitination and proteolysis. Phosphorylation at Ser-932 is also required for ubiquitination by the KPC complex and limited processing to generate NF-kappa-B p50 (Nuclear factor NF-kappa-B p50 subunit). Polyubiquitinated at multiple Lys residues in the C-terminus. Polyubiquitinated by the SCF(FBXW11) and SCF(BTRC) complexes following phosphorylation at Ser-928, Ser-932 and Ser-937, leading to its complete degradation. In contrast, polyubiquitination by the KPC complex following phosphorylation at Ser-932 leads to limited proteosomal processing and generation of the active NF-kappa-B p50 (Nuclear factor NF-kappa-B p50 subunit). Post-translationally, S-nitrosylation of Cys-60 affects DNA binding. In terms of processing, the covalent modification of cysteine by 15-deoxy-Delta12,14-prostaglandin-J2 is autocatalytic and reversible. It may occur as an alternative to other cysteine modifications, such as S-nitrosylation and S-palmitoylation.

The protein localises to the cytoplasm. It is found in the nucleus. In terms of biological role, NF-kappa-B is a pleiotropic transcription factor present in almost all cell types and is the endpoint of a series of signal transduction events that are initiated by a vast array of stimuli related to many biological processes such as inflammation, immunity, differentiation, cell growth, tumorigenesis and apoptosis. NF-kappa-B is a homo- or heterodimeric complex formed by the Rel-like domain-containing proteins RELA/p65, RELB, NFKB1/p105, NFKB1/p50, REL and NFKB2/p52 and the heterodimeric p65-p50 complex appears to be most abundant one. The dimers bind at kappa-B sites in the DNA of their target genes and the individual dimers have distinct preferences for different kappa-B sites that they can bind with distinguishable affinity and specificity. Different dimer combinations act as transcriptional activators or repressors, respectively. NF-kappa-B is controlled by various mechanisms of post-translational modification and subcellular compartmentalization as well as by interactions with other cofactors or corepressors. NF-kappa-B complexes are held in the cytoplasm in an inactive state complexed with members of the NF-kappa-B inhibitor (I-kappa-B) family. In a conventional activation pathway, I-kappa-B is phosphorylated by I-kappa-B kinases (IKKs) in response to different activators, subsequently degraded thus liberating the active NF-kappa-B complex which translocates to the nucleus. NF-kappa-B heterodimeric p65-p50 and RelB-p50 complexes are transcriptional activators. The NF-kappa-B p50-p50 homodimer is a transcriptional repressor, but can act as a transcriptional activator when associated with BCL3. NFKB1 appears to have dual functions such as cytoplasmic retention of attached NF-kappa-B proteins by p105 and generation of p50 by a cotranslational processing. The proteasome-mediated process ensures the production of both p50 and p105 and preserves their independent function, although processing of NFKB1/p105 also appears to occur post-translationally. p50 binds to the kappa-B consensus sequence 5'-GGRNNYYCC-3', located in the enhancer region of genes involved in immune response and acute phase reactions. In a complex with MAP3K8, NFKB1/p105 represses MAP3K8-induced MAPK signaling; active MAP3K8 is released by proteasome-dependent degradation of NFKB1/p105. Functionally, P105 is the precursor of the active p50 subunit (Nuclear factor NF-kappa-B p50 subunit) of the nuclear factor NF-kappa-B. Acts as a cytoplasmic retention of attached NF-kappa-B proteins by p105. Its function is as follows. Constitutes the active form, which associates with RELA/p65 to form the NF-kappa-B p65-p50 complex to form a transcription factor. Together with RELA/p65, binds to the kappa-B consensus sequence 5'-GGRNNYYCC-3', located in the enhancer region of genes involved in immune response and acute phase reactions. The protein is Nuclear factor NF-kappa-B p105 subunit (Nfkb1) of Rattus norvegicus (Rat).